The sequence spans 312 residues: Ribose-phosphate pyrophosphokinase (312 aa).

ATP contacts are provided by residues 34–36 (DGE) and 93–94 (RQ). His128 and Asp167 together coordinate Mg(2+). The active site involves Lys191. Positions 193 and 217 each coordinate D-ribose 5-phosphate.

It belongs to the ribose-phosphate pyrophosphokinase family. Class I subfamily. Homohexamer. Mg(2+) is required as a cofactor.

It is found in the cytoplasm. The catalysed reaction is D-ribose 5-phosphate + ATP = 5-phospho-alpha-D-ribose 1-diphosphate + AMP + H(+). Its pathway is metabolic intermediate biosynthesis; 5-phospho-alpha-D-ribose 1-diphosphate biosynthesis; 5-phospho-alpha-D-ribose 1-diphosphate from D-ribose 5-phosphate (route I): step 1/1. Its function is as follows. Involved in the biosynthesis of the central metabolite phospho-alpha-D-ribosyl-1-pyrophosphate (PRPP) via the transfer of pyrophosphoryl group from ATP to 1-hydroxyl of ribose-5-phosphate (Rib-5-P). The sequence is that of Ribose-phosphate pyrophosphokinase from Baumannia cicadellinicola subsp. Homalodisca coagulata.